Here is a 93-residue protein sequence, read N- to C-terminus: Large ribosomal subunit protein uL23 (93 aa).

This sequence belongs to the universal ribosomal protein uL23 family. Part of the 50S ribosomal subunit. Contacts protein L29, and trigger factor when it is bound to the ribosome.

One of the early assembly proteins it binds 23S rRNA. One of the proteins that surrounds the polypeptide exit tunnel on the outside of the ribosome. Forms the main docking site for trigger factor binding to the ribosome. The chain is Large ribosomal subunit protein uL23 from Campylobacter hominis (strain ATCC BAA-381 / DSM 21671 / CCUG 45161 / LMG 19568 / NCTC 13146 / CH001A).